Consider the following 168-residue polypeptide: Nucleoside deoxyribosyltransferase (168 aa).

The active-site Nucleophile is E103.

The protein belongs to the nucleoside deoxyribosyltransferase family.

It catalyses the reaction 2-deoxy-D-ribosyl-base(1) + base(2) = 2-deoxy-D-ribosyl-base(2) + base(1).. It participates in nucleotide metabolism; nucleotide salvage pathway. Catalyzes the cleavage of the glycosidic bond of 2'-deoxyribonucleosides and the transfer of the deoxyribosyl moiety to an acceptor purine or pyrimidine base. In Limosilactobacillus fermentum (Lactobacillus fermentum), this protein is Nucleoside deoxyribosyltransferase (ntd).